Reading from the N-terminus, the 75-residue chain is Translational regulator CsrA (75 aa).

It belongs to the CsrA/RsmA family. Homodimer; the beta-strands of each monomer intercalate to form a hydrophobic core, while the alpha-helices form wings that extend away from the core.

The protein resides in the cytoplasm. In terms of biological role, a translational regulator that binds mRNA to regulate translation initiation and/or mRNA stability. Usually binds in the 5'-UTR at or near the Shine-Dalgarno sequence preventing ribosome-binding, thus repressing translation. Its main target seems to be the major flagellin gene, while its function is anatagonized by FliW. The polypeptide is Translational regulator CsrA (Acetivibrio thermocellus (strain ATCC 27405 / DSM 1237 / JCM 9322 / NBRC 103400 / NCIMB 10682 / NRRL B-4536 / VPI 7372) (Clostridium thermocellum)).